The chain runs to 460 residues: uncharacterized protein (460 aa).

The TRAM domain maps to 8 to 66 (PVEKNEFIDVVFEDLTHDGAGVAKVKGYPIFVKNGLPGEEAQIKIIKVKKNFAFGRLMK). The [4Fe-4S] cluster site is built by Cys-79, Cys-85, Cys-88, and Cys-166. S-adenosyl-L-methionine is bound by residues Gln-290, Tyr-319, Glu-340, and Asp-388. Residue Cys-415 is the Nucleophile of the active site.

This sequence belongs to the class I-like SAM-binding methyltransferase superfamily. RNA M5U methyltransferase family.

This is an uncharacterized protein from Bacillus cereus (strain ATCC 10987 / NRS 248).